Consider the following 426-residue polypeptide: Glutamate-1-semialdehyde 2,1-aminomutase (426 aa).

The residue at position 265 (lysine 265) is an N6-(pyridoxal phosphate)lysine.

This sequence belongs to the class-III pyridoxal-phosphate-dependent aminotransferase family. HemL subfamily. As to quaternary structure, homodimer. Pyridoxal 5'-phosphate serves as cofactor.

The protein localises to the cytoplasm. It carries out the reaction (S)-4-amino-5-oxopentanoate = 5-aminolevulinate. The protein operates within porphyrin-containing compound metabolism; protoporphyrin-IX biosynthesis; 5-aminolevulinate from L-glutamyl-tRNA(Glu): step 2/2. The protein is Glutamate-1-semialdehyde 2,1-aminomutase of Aliarcobacter butzleri (strain RM4018) (Arcobacter butzleri).